The sequence spans 368 residues: MLYYLLKYINDVFDPPGFGVIEFLTFRASAAAITALLISLMAGPWFIRYLKGRFIEPVKEEAPPEHKKKKELPTMGGILIIFSIEVSVFLWAKFDDPHVWLVMLAIFWMGLIGFIDDYRKVVLKIKGGLSARYKLLGQISLGLVIGLYTWFDPAFAVLLSKTTIPFIKQLSIDYGIFYIPIVIFIITAVSNSVNLTDGLDGLASGTTAIVVSALGAFSYLAGNAVYADYLKIPFIPGGGEIAVVCMAIVMACVGFLWFNSNPAEIIMGDTGSLALGSAVAVIALLIKQELLLPVLAGVFVLEALSVSMQVLYFKLTKKLSGQGRRIFLMAPLHHHFQLKGWAEQKIVIRFWIISILFFLTSLMTLKLR.

The next 9 helical transmembrane spans lie at 30–50 (AAAI…IRYL), 72–92 (LPTM…FLWA), 98–118 (HVWL…IDDY), 139–159 (ISLG…AVLL), 170–190 (LSID…TAVS), 201–221 (GLAS…SYLA), 238–258 (GGEI…FLWF), 264–286 (EIIM…ALLI), and 345–365 (KIVI…LMTL).

It belongs to the glycosyltransferase 4 family. MraY subfamily. Requires Mg(2+) as cofactor.

The protein localises to the cell inner membrane. It catalyses the reaction UDP-N-acetyl-alpha-D-muramoyl-L-alanyl-gamma-D-glutamyl-meso-2,6-diaminopimeloyl-D-alanyl-D-alanine + di-trans,octa-cis-undecaprenyl phosphate = di-trans,octa-cis-undecaprenyl diphospho-N-acetyl-alpha-D-muramoyl-L-alanyl-D-glutamyl-meso-2,6-diaminopimeloyl-D-alanyl-D-alanine + UMP. It participates in cell wall biogenesis; peptidoglycan biosynthesis. Catalyzes the initial step of the lipid cycle reactions in the biosynthesis of the cell wall peptidoglycan: transfers peptidoglycan precursor phospho-MurNAc-pentapeptide from UDP-MurNAc-pentapeptide onto the lipid carrier undecaprenyl phosphate, yielding undecaprenyl-pyrophosphoryl-MurNAc-pentapeptide, known as lipid I. This is Phospho-N-acetylmuramoyl-pentapeptide-transferase from Chlorobium phaeobacteroides (strain DSM 266 / SMG 266 / 2430).